Reading from the N-terminus, the 310-residue chain is MTTLKGRDFISLHDWSRDELEEVLELAMWQKARLKAGIRDEPLKGKQLGMYFAKPSTRTRLSFEVGIRQLGGDALFLSAHDLQLQRGESIADTARVMSRFLDGIMIRTFSHREVVELAEWATIPVINGLTDEEHPCQVVADLLTALERFGTLPGLKLAYVGDGNNVAHSLMDGGAKFGMHVVVASPEGYQPDPARVARAQVTAARYGGLVEVVTDPVLAVTGAQIVYTDVWASMGQEAEAEQRRKAFAGYQVTAELMRCAAPEAIFMHCLPAHRGEEVAAEVIDGPQSAVFDEAENRLHAQKAIMTLIMA.

Residues 56–59 (STRT), glutamine 83, arginine 107, and 134–137 (HPCQ) each bind carbamoyl phosphate. Residues asparagine 165, aspartate 229, and 233–234 (SM) each bind L-ornithine. Carbamoyl phosphate-binding positions include 269–270 (CL) and arginine 297.

The protein belongs to the aspartate/ornithine carbamoyltransferase superfamily. OTCase family.

Its subcellular location is the cytoplasm. The catalysed reaction is carbamoyl phosphate + L-ornithine = L-citrulline + phosphate + H(+). It functions in the pathway amino-acid biosynthesis; L-arginine biosynthesis; L-arginine from L-ornithine and carbamoyl phosphate: step 1/3. In terms of biological role, reversibly catalyzes the transfer of the carbamoyl group from carbamoyl phosphate (CP) to the N(epsilon) atom of ornithine (ORN) to produce L-citrulline. The protein is Ornithine carbamoyltransferase of Symbiobacterium thermophilum (strain DSM 24528 / JCM 14929 / IAM 14863 / T).